We begin with the raw amino-acid sequence, 157 residues long: MTEDAKTSLSSADIIEIMKLLPHRYPFLMVDRIIEIDSDNSAIGIKNVTANEPQFTGHFPGSPIMPGVLLIEGMAQTAGAICARKDGIGGNLVYFMTIDNARFRKPVVPGDRVEFHVVKQKQRGTIWKFHCDAKVDGSVVAEADIGAMIVRKDPDQA.

H58 is a catalytic residue.

Belongs to the thioester dehydratase family. FabZ subfamily.

The protein localises to the cytoplasm. The catalysed reaction is a (3R)-hydroxyacyl-[ACP] = a (2E)-enoyl-[ACP] + H2O. Functionally, involved in unsaturated fatty acids biosynthesis. Catalyzes the dehydration of short chain beta-hydroxyacyl-ACPs and long chain saturated and unsaturated beta-hydroxyacyl-ACPs. The protein is 3-hydroxyacyl-[acyl-carrier-protein] dehydratase FabZ of Rhizobium rhizogenes (strain K84 / ATCC BAA-868) (Agrobacterium radiobacter).